The primary structure comprises 269 residues: 1,6-dihydroxycyclohexa-2,4-diene-1-carboxylate dehydrogenase (269 aa).

Position 11-35 (11-35 (VITGAAQGIGRRVAERMAAEGGRLL)) interacts with NAD(+). Ser142 contacts substrate. Tyr153 serves as the catalytic Proton acceptor.

This sequence belongs to the short-chain dehydrogenases/reductases (SDR) family. Homodimer.

It catalyses the reaction (1R,6S)-1,6-dihydroxycyclohexa-2,4-diene-1-carboxylate + NAD(+) = catechol + CO2 + NADH. Its pathway is aromatic compound metabolism; benzoate degradation via hydroxylation; catechol from benzoate: step 2/2. In terms of biological role, degradation of 2-hydro-1,2-dihydroxy benzoate (DHB) to catechol. This is 1,6-dihydroxycyclohexa-2,4-diene-1-carboxylate dehydrogenase (xylL) from Pseudomonas putida (Arthrobacter siderocapsulatus).